A 130-amino-acid polypeptide reads, in one-letter code: Small ribosomal subunit protein uS9 (130 aa).

This sequence belongs to the universal ribosomal protein uS9 family.

The chain is Small ribosomal subunit protein uS9 from Shigella dysenteriae serotype 1 (strain Sd197).